A 192-amino-acid chain; its full sequence is uncharacterized protein (192 aa).

Transmembrane regions (helical) follow at residues 31–51 and 119–139; these read IVETIGYFIFWLGGFSPYVYE and VPGAVLMAFLLGVFSGVLWEI.

The protein localises to the cell membrane. This is an uncharacterized protein from Thermotoga maritima (strain ATCC 43589 / DSM 3109 / JCM 10099 / NBRC 100826 / MSB8).